Here is a 141-residue protein sequence, read N- to C-terminus: MTYAIVETGGKQLWVEPGRFYEVDRLAEVEENSPFDLSRVLLINHEGQITLGHPYVSEAVVRARVLQHRRGDKIIVYKMRPKKKTRKKRGHRQPLTRLLIESIELNGVPLATAPSRTEAAPESNPEAAPSAAATGIPADEE.

The interval 111 to 141 (ATAPSRTEAAPESNPEAAPSAAATGIPADEE) is disordered. Positions 118-133 (EAAPESNPEAAPSAAA) are enriched in low complexity.

It belongs to the bacterial ribosomal protein bL21 family. In terms of assembly, part of the 50S ribosomal subunit. Contacts protein L20.

Its function is as follows. This protein binds to 23S rRNA in the presence of protein L20. The polypeptide is Large ribosomal subunit protein bL21 (Synechococcus sp. (strain JA-2-3B'a(2-13)) (Cyanobacteria bacterium Yellowstone B-Prime)).